Here is a 644-residue protein sequence, read N- to C-terminus: Acetolactate synthase 1, chloroplastic (644 aa).

The N-terminal 43 residues, 1 to 43 (MATTAAAAAAALSAAATAKTGRKNHQRHHVLPARGRVGAAAVR), are a transit peptide targeting the chloroplast. The tract at residues 47 to 67 (VSPVTPPSPAPPATPLRPWGP) is disordered. Pro residues predominate over residues 50 to 61 (VTPPSPAPPATP). Thiamine diphosphate is bound at residue Glu-118. Cys-138 and Cys-284 are disulfide-bonded. Residues Arg-220, 326–347 (HGTV…FGVR), and 369–388 (DIDP…ICAD) each bind FAD. Positions 461–541 (QHQMWAAQYY…VKVMVLNNQH (81 aa)) are thiamine pyrophosphate binding. 2 residues coordinate Mg(2+): Asp-512 and Asn-539.

It belongs to the TPP enzyme family. Mg(2+) is required as a cofactor. Requires thiamine diphosphate as cofactor.

The protein localises to the plastid. Its subcellular location is the chloroplast. It carries out the reaction 2 pyruvate + H(+) = (2S)-2-acetolactate + CO2. It participates in amino-acid biosynthesis; L-isoleucine biosynthesis; L-isoleucine from 2-oxobutanoate: step 1/4. It functions in the pathway amino-acid biosynthesis; L-valine biosynthesis; L-valine from pyruvate: step 1/4. The sequence is that of Acetolactate synthase 1, chloroplastic (ALS1) from Oryza sativa subsp. japonica (Rice).